The primary structure comprises 401 residues: Argininosuccinate synthase (401 aa).

ATP-binding positions include 7–15 and alanine 34; that span reads AYSGGLDTS. Residues tyrosine 85 and serine 90 each contribute to the L-citrulline site. Glycine 115 is an ATP binding site. Residues threonine 117, asparagine 121, and aspartate 122 each contribute to the L-aspartate site. Residue asparagine 121 coordinates L-citrulline. L-citrulline is bound by residues arginine 125, serine 174, serine 183, glutamate 259, and tyrosine 271.

This sequence belongs to the argininosuccinate synthase family. Type 1 subfamily. As to quaternary structure, homotetramer.

The protein resides in the cytoplasm. The catalysed reaction is L-citrulline + L-aspartate + ATP = 2-(N(omega)-L-arginino)succinate + AMP + diphosphate + H(+). It participates in amino-acid biosynthesis; L-arginine biosynthesis; L-arginine from L-ornithine and carbamoyl phosphate: step 2/3. The sequence is that of Argininosuccinate synthase from Pelotomaculum thermopropionicum (strain DSM 13744 / JCM 10971 / SI).